The following is a 559-amino-acid chain: Actin-binding protein WASF1 (559 aa).

Disordered stretches follow at residues 170–202 (EDKR…DRRR), 304–383 (IENR…GVLH), and 412–490 (VHPL…HPST). The segment covering 182 to 202 (KNLDRPHEPEKVPRAPHDRRR) has biased composition (basic and acidic residues). Residues 304-313 (IENRPQSPAT) are compositionally biased toward polar residues. A compositionally biased stretch (pro residues) spans 322 to 332 (PTPPPPPPPLP). Over residues 333–346 (SALSTSSLRASMTS) the composition is skewed to low complexity. Arg-341 is modified (asymmetric dimethylarginine; alternate). The residue at position 341 (Arg-341) is an Omega-N-methylarginine; alternate. Pro residues-rich tracts occupy residues 347–360 (TPPP…PPPA), 423–437 (LPPP…PPGI), and 460–477 (STAP…PPSQ). Ser-489 is subject to Phosphoserine. In terms of domain architecture, WH2 spans 497-514 (ARSVLLEAIRKGIQLRKV).

This sequence belongs to the SCAR/WAVE family. In terms of assembly, component of the WAVE1 complex composed of ABI2, CYFIP1 or CYFIP2, BRK1, NCKAP1 and WASF1/WAVE1. Within the complex, a heterodimer containing NCKAP1 and CYFIP1 interacts with a heterotrimer formed by WAVE1, ABI2 and BRK1. CYFIP2 binds to activated RAC1 which causes the complex to dissociate, releasing activated WASF1. The complex can also be activated by NCK1. Binds actin and the Arp2/3 complex. Interacts with BAIAP2. Interacts with SHANK3; the interaction mediates the association of SHANK3 with the WAVE1 complex. Interacts with ABI1 (via N-terminus). Interacts with SORBS2; this interaction greatly enhances phosphorylation by ABL1 and dephosphorylation by PTPN12 and might mediate partial to focal adhesion sites.

The protein localises to the cytoplasm. Its subcellular location is the cytoskeleton. It is found in the synapse. It localises to the cell junction. The protein resides in the focal adhesion. In terms of biological role, downstream effector molecule involved in the transmission of signals from tyrosine kinase receptors and small GTPases to the actin cytoskeleton. Promotes formation of actin filaments. Part of the WAVE complex that regulates lamellipodia formation. The WAVE complex regulates actin filament reorganization via its interaction with the Arp2/3 complex. As component of the WAVE1 complex, required for BDNF-NTRK2 endocytic trafficking and signaling from early endosomes. Also involved in the regulation of mitochondrial dynamics. The protein is Actin-binding protein WASF1 (WASF1) of Pongo abelii (Sumatran orangutan).